Here is a 328-residue protein sequence, read N- to C-terminus: uncharacterized protein (328 aa).

This is an uncharacterized protein from Schizosaccharomyces pombe (strain 972 / ATCC 24843) (Fission yeast).